We begin with the raw amino-acid sequence, 334 residues long: Thiamine thiazole synthase (334 aa).

Residues Cys86, 107–108 (EA), Gly115, and Val183 contribute to the substrate site. Cys221 is modified (2,3-didehydroalanine (Cys)). Substrate is bound by residues Asp223, His238, Met290, and 300–302 (RMG).

This sequence belongs to the THI4 family. As to quaternary structure, homooctamer. It depends on Fe cation as a cofactor. Post-translationally, during the catalytic reaction, a sulfide is transferred from Cys-221 to a reaction intermediate, generating a dehydroalanine residue.

The protein localises to the cytoplasm. It localises to the nucleus. It catalyses the reaction [ADP-thiazole synthase]-L-cysteine + glycine + NAD(+) = [ADP-thiazole synthase]-dehydroalanine + ADP-5-ethyl-4-methylthiazole-2-carboxylate + nicotinamide + 3 H2O + 2 H(+). Functionally, involved in biosynthesis of the thiamine precursor thiazole. Catalyzes the conversion of NAD and glycine to adenosine diphosphate 5-(2-hydroxyethyl)-4-methylthiazole-2-carboxylic acid (ADT), an adenylated thiazole intermediate. The reaction includes an iron-dependent sulfide transfer from a conserved cysteine residue of the protein to a thiazole intermediate. The enzyme can only undergo a single turnover, which suggests it is a suicide enzyme. May have additional roles in adaptation to various stress conditions and in DNA damage tolerance. This chain is Thiamine thiazole synthase, found in Ajellomyces capsulatus (strain G186AR / H82 / ATCC MYA-2454 / RMSCC 2432) (Darling's disease fungus).